We begin with the raw amino-acid sequence, 176 residues long: MIDDDGYRPNVGIVICNRQGQVMWARRYGQHSWQFPQGGINPGESAEQAMYRELFEEVGLSRKDVRILASTRNWLRYKLPKRLVRWDTKPVCIGQKQKWFLLQLMSADAEINMQTSSTPEFDGWRWVSYWYPVRQVVSFKRDVYRRVMKEFASVVMALQDNTPKPQNSPAYRRKRG.

The region spanning 6–149 (GYRPNVGIVI…KRDVYRRVMK (144 aa)) is the Nudix hydrolase domain. Residues 38-59 (GGINPGESAEQAMYRELFEEVG) carry the Nudix box motif.

Belongs to the Nudix hydrolase family. RppH subfamily. The cofactor is a divalent metal cation.

Accelerates the degradation of transcripts by removing pyrophosphate from the 5'-end of triphosphorylated RNA, leading to a more labile monophosphorylated state that can stimulate subsequent ribonuclease cleavage. This is RNA pyrophosphohydrolase from Escherichia fergusonii (strain ATCC 35469 / DSM 13698 / CCUG 18766 / IAM 14443 / JCM 21226 / LMG 7866 / NBRC 102419 / NCTC 12128 / CDC 0568-73).